The following is a 334-amino-acid chain: Protein-methionine-sulfoxide reductase catalytic subunit MsrP (334 aa).

A signal peptide (tat-type signal) is located at residues Met-1–Ala-44. Residues Asn-88, Tyr-91 to Glu-92, Cys-146, Thr-181, Asn-233, Arg-238, and Gly-249 to Lys-251 contribute to the Mo-molybdopterin site.

The protein belongs to the MsrP family. As to quaternary structure, heterodimer of a catalytic subunit (MsrP) and a heme-binding subunit (MsrQ). Requires Mo-molybdopterin as cofactor. Predicted to be exported by the Tat system. The position of the signal peptide cleavage has not been experimentally proven.

It localises to the periplasm. It carries out the reaction L-methionyl-[protein] + a quinone + H2O = L-methionyl-(S)-S-oxide-[protein] + a quinol. The catalysed reaction is L-methionyl-[protein] + a quinone + H2O = L-methionyl-(R)-S-oxide-[protein] + a quinol. In terms of biological role, part of the MsrPQ system that repairs oxidized periplasmic proteins containing methionine sulfoxide residues (Met-O), using respiratory chain electrons. Thus protects these proteins from oxidative-stress damage caused by reactive species of oxygen and chlorine generated by the host defense mechanisms. MsrPQ is essential for the maintenance of envelope integrity under bleach stress, rescuing a wide series of structurally unrelated periplasmic proteins from methionine oxidation, including the primary periplasmic chaperone SurA and the lipoprotein Pal. The catalytic subunit MsrP is non-stereospecific, being able to reduce both (R-) and (S-) diastereoisomers of methionine sulfoxide. This is Protein-methionine-sulfoxide reductase catalytic subunit MsrP from Salmonella agona (strain SL483).